We begin with the raw amino-acid sequence, 380 residues long: Maintenance of mitochondrial morphology protein 1 (380 aa).

The Lumenal segment spans residues 1 to 64 (MQGRAIWAEG…IVPSLSFIQG (64 aa)). A helical membrane pass occupies residues 65 to 85 (FMAGQAVLLMLFLGLFRYFFM). The Cytoplasmic segment spans residues 86–380 (TSSPGTRAQQ…IGTSPADPLA (295 aa)). An SMP-LTD domain is found at 147–369 (APESLDWLNV…WPHFWHIPLP (223 aa)).

This sequence belongs to the MMM1 family. Homodimer. Component of the ER-mitochondria encounter structure (ERMES) or MDM complex, composed of MMM1, MDM10, MDM12 and MDM34. An MMM1 homodimer associates with one molecule of MDM12 on each side in a pairwise head-to-tail manner, and the SMP-LTD domains of MMM1 and MDM12 generate a continuous hydrophobic tunnel for phospholipid trafficking.

It is found in the endoplasmic reticulum membrane. Component of the ERMES/MDM complex, which serves as a molecular tether to connect the endoplasmic reticulum (ER) and mitochondria. Components of this complex are involved in the control of mitochondrial shape and protein biogenesis, and function in nonvesicular lipid trafficking between the ER and mitochondria. The MDM12-MMM1 subcomplex functions in the major beta-barrel assembly pathway that is responsible for biogenesis of all outer membrane beta-barrel proteins, and acts in a late step after the SAM complex. The MDM10-MDM12-MMM1 subcomplex further acts in the TOM40-specific pathway after the action of the MDM12-MMM1 complex. Essential for establishing and maintaining the structure of mitochondria and maintenance of mtDNA nucleoids. The polypeptide is Maintenance of mitochondrial morphology protein 1 (Malassezia globosa (strain ATCC MYA-4612 / CBS 7966) (Dandruff-associated fungus)).